A 491-amino-acid polypeptide reads, in one-letter code: Cobyric acid synthase (491 aa).

One can recognise a GATase cobBQ-type domain in the interval 251–444; the sequence is GITIAVIRLP…LHGLFTNDEF (194 aa). C329 functions as the Nucleophile in the catalytic mechanism. H436 is a catalytic residue.

This sequence belongs to the CobB/CobQ family. CobQ subfamily.

Its pathway is cofactor biosynthesis; adenosylcobalamin biosynthesis. Catalyzes amidations at positions B, D, E, and G on adenosylcobyrinic A,C-diamide. NH(2) groups are provided by glutamine, and one molecule of ATP is hydrogenolyzed for each amidation. The chain is Cobyric acid synthase from Chloroflexus aggregans (strain MD-66 / DSM 9485).